We begin with the raw amino-acid sequence, 138 residues long: Phospholipase A2 group V (138 aa).

The signal sequence occupies residues 1–20; that stretch reads MKGLLPLAWFLACSVPAVQG. 6 disulfides stabilise this stretch: Cys46/Cys137, Cys48/Cys64, Cys63/Cys117, Cys70/Cys110, Cys79/Cys103, and Cys97/Cys108. Residues Tyr47, Gly49, and Gly51 each coordinate Ca(2+). His67 is an active-site residue. Asp68 contacts Ca(2+). Residue Asp111 is part of the active site.

It belongs to the phospholipase A2 family. Requires Ca(2+) as cofactor. This enzyme lacks one of the seven disulfide bonds found in similar PLA2 proteins. As to expression, heart, placenta and less abundantly, in lung. Detected in the outer and inner plexiform layers of the retina (at protein level). Expressed in monocytes and macrophages.

Its subcellular location is the secreted. The protein localises to the cell membrane. It localises to the cytoplasmic vesicle. It is found in the phagosome. The protein resides in the recycling endosome. Its subcellular location is the golgi apparatus. The protein localises to the cis-Golgi network. It localises to the trans-Golgi network. The catalysed reaction is a 1,2-diacyl-sn-glycero-3-phosphocholine + H2O = a 1-acyl-sn-glycero-3-phosphocholine + a fatty acid + H(+). The enzyme catalyses 1-hexadecanoyl-2-(9Z-octadecenoyl)-sn-glycero-3-phosphocholine + H2O = 1-hexadecanoyl-sn-glycero-3-phosphocholine + (9Z)-octadecenoate + H(+). It carries out the reaction 1-hexadecanoyl-2-(5Z,8Z,11Z,14Z-eicosatetraenoyl)-sn-glycero-3-phosphocholine + H2O = 1-hexadecanoyl-sn-glycero-3-phosphocholine + (5Z,8Z,11Z,14Z)-eicosatetraenoate + H(+). It catalyses the reaction 1-hexadecanoyl-2-(9Z,12Z-octadecadienoyl)-sn-glycero-3-phosphoethanolamine + H2O = 1-hexadecanoyl-sn-glycero-3-phosphoethanolamine + (9Z,12Z)-octadecadienoate + H(+). The catalysed reaction is 1-hexadecanoyl-2-(5Z,8Z,11Z,14Z-eicosatetraenoyl)-sn-glycero-3-phosphoethanolamine + H2O = 1-hexadecanoyl-sn-glycero-3-phosphoethanolamine + (5Z,8Z,11Z,14Z)-eicosatetraenoate + H(+). The enzyme catalyses 1-octadecanoyl-2-(5Z,8Z,11Z,14Z-eicosatetraenoyl)-sn-glycero-3-phospho-(1D-myo-inositol) + H2O = 1-octadecanoyl-sn-glycero-3-phospho-(1D-myo-inositol) + (5Z,8Z,11Z,14Z)-eicosatetraenoate + H(+). It carries out the reaction 1-hexadecanoyl-2-(9Z-octadecenoyl)-sn-glycero-3-phosphoglycerol + H2O = 1-hexadecanoyl-sn-glycero-3-phosphoglycerol + (9Z)-octadecenoate + H(+). It catalyses the reaction N-hexadecanoyl-1,2-di-(9Z-octadecenoyl)-sn-glycero-3-phosphoethanolamine + H2O = N-hexadecanoyl-1-(9Z-octadecenoyl)-sn-glycero-3-phosphoethanolamine + (9Z)-octadecenoate + H(+). The catalysed reaction is 1'-[1,2-di-(9Z-octadecenoyl)-sn-glycero-3-phospho]-3'-[1-(9Z-octadecenoyl)-sn-glycero-3-phospho]-glycerol + H2O = 1',3'-bis-[1-(9Z-octadecenoyl)-sn-glycero-3-phospho]-glycerol + (9Z)-octadecenoate + H(+). The enzyme catalyses 1',3'-bis[1,2-di-(9Z-octadecenoyl)-sn-glycero-3-phospho]-glycerol + H2O = 1'-[1,2-di-(9Z-octadecenoyl)-sn-glycero-3-phospho]-3'-[1-(9Z-octadecenoyl)-sn-glycero-3-phospho]-glycerol + (9Z)-octadecenoate + H(+). It functions in the pathway lipid metabolism; phospholipid metabolism. Its pathway is lipid metabolism; leukotriene B4 biosynthesis. It participates in lipid metabolism; leukotriene C4 biosynthesis. With respect to regulation, activated by cardiolipin. Its function is as follows. Secretory calcium-dependent phospholipase A2 that primarily targets extracellular phospholipids. Hydrolyzes the ester bond of the fatty acyl group attached at sn-2 position of phospholipids (phospholipase A2 activity), preferentially releasing fatty acyl groups with a low degree of unsaturation such as oleoyl (C18:1) and linoleoyl (C18:2) groups. Hydrolyzes low-density lipoprotein (LDL) phospholipids releasing unsaturated fatty acids that drive macrophage polarization toward an M2 phenotype. May act in an autocrine and paracrine manner. Contributes to lipid remodeling of cellular membranes at different subcellular locations and generation of lipid mediators involved in pathogen clearance. Cleaves sn-2 fatty acyl chains of cardiolipin, a major component of the inner membrane of mitochondria and bacterial membranes. Promotes phagocytosis of bacteria in macrophages through production of lysophosphatidylethanolamines. Displays bactericidal activity against Gram-positive bacteria by directly hydrolyzing phospholipids of the bacterial membrane. Promotes phagocytosis and killing of ingested fungi likely through controlling phagosome-lysosome fusion and phagosome maturation. Plays a role in biosynthesis of cysteinyl leukotrienes (CysLTs) in myeloid cells. In eosinophils, triggers perinuclear arachidonate release and LTC4 synthesis in a PLA2G4A-independent way. In neutrophils, amplifies CysLTs biosynthesis initiated by PLA2G4A. Promotes immune complex clearance in macrophages via stimulating synthesis of CysLTs, which act through CYSLTR1 to trigger phagocytosis. May regulate antigen processing in antigen-presenting cells. In pulmonary macrophages regulates IL33 production required for activation of group 2 innate lymphoid cells. May play a role in the biosynthesis of N-acyl ethanolamines that regulate energy metabolism. Hydrolyzes N-acyl phosphatidylethanolamines to N-acyl lysophosphatidylethanolamines, which are further cleaved by a lysophospholipase D to release N-acyl ethanolamines. In Homo sapiens (Human), this protein is Phospholipase A2 group V (PLA2G5).